The chain runs to 335 residues: Fructose-1,6-bisphosphatase class 1 (335 aa).

4 residues coordinate Mg(2+): glutamate 92, aspartate 114, leucine 116, and aspartate 117. Residues 117 to 120 (DGSS) and asparagine 209 contribute to the substrate site. Residue glutamate 281 participates in Mg(2+) binding.

Belongs to the FBPase class 1 family. As to quaternary structure, homotetramer. The cofactor is Mg(2+).

It localises to the cytoplasm. It catalyses the reaction beta-D-fructose 1,6-bisphosphate + H2O = beta-D-fructose 6-phosphate + phosphate. The protein operates within carbohydrate biosynthesis; gluconeogenesis. In Nitrosococcus oceani (strain ATCC 19707 / BCRC 17464 / JCM 30415 / NCIMB 11848 / C-107), this protein is Fructose-1,6-bisphosphatase class 1.